The primary structure comprises 451 residues: Secreted RxLR effector protein 111 (451 aa).

Residues 1-19 form the signal peptide; sequence MRGTLATALLLVASCRIAA. Positions 48-69 match the RxLR-dEER motif; sequence RFLRDNREQRVALALTAANESR. Asn-66 carries an N-linked (GlcNAc...) asparagine glycan. Composition is skewed to polar residues over residues 175–184 and 413–426; these read RKTLSKTQFK and SPAS…QRTG. Disordered regions lie at residues 175-194 and 404-451; these read RKTL…STKR and IPLQ…NKHA. The span at 437 to 451 shows a compositional bias: basic and acidic residues; the sequence is PERDSFRHIESNKHA.

It belongs to the RxLR effector family.

It localises to the secreted. The protein localises to the host nucleus. Functionally, secreted effector that acts as an elicitor that induces cell death in host plant cells. The polypeptide is Secreted RxLR effector protein 111 (Plasmopara viticola (Downy mildew of grapevine)).